A 253-amino-acid chain; its full sequence is Mediator of RNA polymerase II transcription subunit 10 (253 aa).

Disordered stretches follow at residues 32 to 63 (YDTN…HASS), 88 to 109 (LPSS…TELE), and 206 to 253 (VEAT…QSGQ). Low complexity predominate over residues 34–47 (TNPSSSNNNTPTSS). The span at 50–60 (SGGGGGGGGGH) shows a compositional bias: gly residues. Residues 88 to 104 (LPSSPSSGPSNNQPQQG) are compositionally biased toward low complexity. Over residues 231-253 (SAGGEGQQGQGQGQQGQGQQSGQ) the composition is skewed to gly residues.

It belongs to the Mediator complex subunit 10 family. Component of the Mediator complex.

It localises to the nucleus. Its function is as follows. Component of the Mediator complex, a coactivator involved in the regulated transcription of nearly all RNA polymerase II-dependent genes. Mediator functions as a bridge to convey information from gene-specific regulatory proteins to the basal RNA polymerase II transcription machinery. Mediator is recruited to promoters by direct interactions with regulatory proteins and serves as a scaffold for the assembly of a functional preinitiation complex with RNA polymerase II and the general transcription factors. This Neurospora crassa (strain ATCC 24698 / 74-OR23-1A / CBS 708.71 / DSM 1257 / FGSC 987) protein is Mediator of RNA polymerase II transcription subunit 10 (nut2).